The sequence spans 630 residues: 1,4-alpha-glucan branching enzyme GlgB (630 aa).

Aspartate 308 acts as the Nucleophile in catalysis. The active-site Proton donor is glutamate 361.

This sequence belongs to the glycosyl hydrolase 13 family. GlgB subfamily. Monomer.

It carries out the reaction Transfers a segment of a (1-&gt;4)-alpha-D-glucan chain to a primary hydroxy group in a similar glucan chain.. It participates in glycan biosynthesis; glycogen biosynthesis. Its function is as follows. Catalyzes the formation of the alpha-1,6-glucosidic linkages in glycogen by scission of a 1,4-alpha-linked oligosaccharide from growing alpha-1,4-glucan chains and the subsequent attachment of the oligosaccharide to the alpha-1,6 position. This chain is 1,4-alpha-glucan branching enzyme GlgB, found in Halothermothrix orenii (strain H 168 / OCM 544 / DSM 9562).